Here is a 178-residue protein sequence, read N- to C-terminus: Large ribosomal subunit protein uL6 (178 aa).

The protein belongs to the universal ribosomal protein uL6 family. Part of the 50S ribosomal subunit.

Functionally, this protein binds to the 23S rRNA, and is important in its secondary structure. It is located near the subunit interface in the base of the L7/L12 stalk, and near the tRNA binding site of the peptidyltransferase center. In Clavibacter sepedonicus (Clavibacter michiganensis subsp. sepedonicus), this protein is Large ribosomal subunit protein uL6.